Here is a 120-residue protein sequence, read N- to C-terminus: Large ribosomal subunit protein uL18 (120 aa).

This sequence belongs to the universal ribosomal protein uL18 family. Part of the 50S ribosomal subunit; part of the 5S rRNA/L5/L18 subcomplex. In B.stearothermophilus only 2 proteins, L5 and L18 have been shown to be part of this subcomplex, unlike the case in E.coli and T.thermophilus where L25 (TL5) is also found. In terms of processing, the protein, when overexpressed in E.coli, contains a phosphoserine, which is required for the protein to bind to 5S rRNA. It has been suggested, based solely on amino acid conservation, that this occurs on Ser-57.

In terms of biological role, this is one of the proteins that bind and probably mediate the attachment of the 5S RNA into the large ribosomal subunit, where it forms part of the central protuberance. This chain is Large ribosomal subunit protein uL18 (rplR), found in Geobacillus stearothermophilus (Bacillus stearothermophilus).